The chain runs to 276 residues: Dermonecrotic toxin LvSicTox-alphaII1 (276 aa).

His-5 is an active-site residue. Residues Glu-25 and Asp-27 each coordinate Mg(2+). The active-site Nucleophile is His-41. Disulfide bonds link Cys-45/Cys-51 and Cys-47/Cys-193. A Mg(2+)-binding site is contributed by Asp-85.

The protein belongs to the arthropod phospholipase D family. Class II subfamily. Requires Mg(2+) as cofactor. In terms of tissue distribution, expressed by the venom gland.

It is found in the secreted. It carries out the reaction an N-(acyl)-sphingosylphosphocholine = an N-(acyl)-sphingosyl-1,3-cyclic phosphate + choline. The catalysed reaction is an N-(acyl)-sphingosylphosphoethanolamine = an N-(acyl)-sphingosyl-1,3-cyclic phosphate + ethanolamine. It catalyses the reaction a 1-acyl-sn-glycero-3-phosphocholine = a 1-acyl-sn-glycero-2,3-cyclic phosphate + choline. The enzyme catalyses a 1-acyl-sn-glycero-3-phosphoethanolamine = a 1-acyl-sn-glycero-2,3-cyclic phosphate + ethanolamine. Dermonecrotic toxins cleave the phosphodiester linkage between the phosphate and headgroup of certain phospholipids (sphingolipid and lysolipid substrates), forming an alcohol (often choline) and a cyclic phosphate. This toxin acts on sphingomyelin (SM). It may also act on ceramide phosphoethanolamine (CPE), lysophosphatidylcholine (LPC) and lysophosphatidylethanolamine (LPE), but not on lysophosphatidylserine (LPS), and lysophosphatidylglycerol (LPG). It acts by transphosphatidylation, releasing exclusively cyclic phosphate products as second products. Induces dermonecrosis, hemolysis, increased vascular permeability, edema, inflammatory response, and platelet aggregation. This chain is Dermonecrotic toxin LvSicTox-alphaII1, found in Loxosceles variegata (Recluse spider).